The sequence spans 263 residues: Aquaporin-8 (263 aa).

Residues 1-38 (MSGEQTPMCSMDLREIKGKETNMADSYHGMSWYEQYIQ) lie on the Cytoplasmic side of the membrane. Residues 39 to 59 (PCVVELLGSALFIFIGCLSVI) form a helical membrane-spanning segment. The residue at position 55 (Cys55) is a Cysteine persulfide. Position 55 is a cysteine sulfenic acid (-SOH) (Cys55). Residues 60–86 (ENSPNTGLLQPALAHGLALGLIIATLG) are Extracellular-facing. Residues 87–107 (NISGGHFNPAVSLAVTLVGGL) form a helical membrane-spanning segment. Residues 94–96 (NPA) carry the NPA 1 motif. Topologically, residues 108-109 (KT) are cytoplasmic. A helical membrane pass occupies residues 110 to 130 (MLLIPYWVSQLFGGMIGAALA). At 131–158 (KVVSPEERFWNASGAAFAIVQEQEQVAE) the chain is on the extracellular side. A glycan (N-linked (GlcNAc...) asparagine) is linked at Asn141. A helical membrane pass occupies residues 159 to 179 (ALGVEIVMTMLLVLAVCMGAV). The Cytoplasmic segment spans residues 180-185 (NEKTMG). The chain crosses the membrane as a helical span at residues 186–206 (PLAPFSIGFSVIVDILAGGGI). Over 207-230 (SGACMNPARAFGPAVMAGYWDFHW) the chain is Extracellular. The NPA 2 signature appears at 212–214 (NPA). Residues 231–251 (IYWLGPLLAGLFVGLLIRLFI) traverse the membrane as a helical segment. The Cytoplasmic portion of the chain corresponds to 252-263 (GDEKTRLILKSR).

The protein belongs to the MIP/aquaporin (TC 1.A.8) family. N-glycosylated. In terms of processing, sulfenylation at Cys-55(C55-SOH) when hydrogen peroxide flows through the AQP8 channel, making it susceptible to hydrogen sulfide produced by CBS. Post-translationally, persulfidation at Cys-55 is required to gate AQP8 channel; under stress condition, hydrogen peroxide accumulates in the cell leading to CBS activation that produces hydrogen sulfide inducing persulfidation of oxidized Cys-55 (C55-SOH). In terms of tissue distribution, highly expressed in sperm, pancreas and liver. Expressed in hepatocytes, acinal cells of pancreas and salivary gland, and absorptive colonic epithelial cells. Expressed in the myoepithelium of submandibular and parotid glands. Expressed in pancreatic beta-cells. Expressed in testis but not in epididymis. Expressed in small intestine.

It localises to the cell membrane. The protein resides in the mitochondrion inner membrane. It is found in the apical cell membrane. The protein localises to the basolateral cell membrane. Its subcellular location is the smooth endoplasmic reticulum membrane. The enzyme catalyses H2O(in) = H2O(out). It catalyses the reaction NH4(+)(in) = NH4(+)(out). It carries out the reaction H2O2(out) = H2O2(in). The catalysed reaction is formamide(out) = formamide(in). The enzyme catalyses methylamine(out) = methylamine(in). With respect to regulation, reversibly gated by a two-step sulfenylation-persulfidation process in cells undergoing diverse stresses. In terms of biological role, channel that allows the facilitated permeation of water and uncharged molecules, such as hydrogen peroxide and the neutral form of ammonia (NH3), through cellular membranes such as plasma membrane, inner mitochondrial membrane and endoplasmic reticulum membrane of several tissues. The transport of ammonia neutral form induces a parallel transport of proton, at alkaline pH when the concentration of ammonia is high. However, it is unclear whether the transport of proton takes place via the aquaporin or via an endogenous pathway. Also, may transport ammonia analogs such as formamide and methylamine, a transport favourited at basic pH due to the increase of unprotonated (neutral) form, which is expected to favor diffusion. Does not transport urea or glycerol. The water transport mechanism is mercury- and copper-sensitive and passive in response to osmotic driving forces. At the canicular plasma membrane, mediates the osmotic transport of water toward the bile canaliculus and facilitates the cAMP-induced bile canalicular water secretion, a process involved in bile formation. In addition, mediates the hydrogen peroxide release from hepatocyte mitochondria that modulates the SREBF2-mediated cholesterol synthesis and facilitates the mitochondrial ammonia uptake which is metabolized into urea, mainly under glucagon stimulation. In B cells, transports the CYBB-generated hydrogen peroxide from the external leaflet of the plasma membrane to the cytosol to promote B cell activation and differentiation for signal amplification. In the small intestine and colon system, mediates water transport through mitochondria and apical membrane of epithelial cells. May play an important role in the adaptive response of proximal tubule cells to acidosis possibly facilitating mitochondrial ammonia transport. This is Aquaporin-8 from Rattus norvegicus (Rat).